The following is a 928-amino-acid chain: Nuclear pore complex-interacting protein family member B12 (928 aa).

The chain crosses the membrane as a helical span at residues Val-73–Ser-93. 2 disordered regions span residues Arg-242–Thr-452 and Glu-663–Ser-928. Positions Gln-252 to Leu-263 are enriched in polar residues. Residues Pro-349–Pro-359 are compositionally biased toward pro residues. Composition is skewed to basic and acidic residues over residues Asp-406–Arg-416, Asp-698–Arg-708, Asp-740–Arg-750, and Asp-782–Arg-792.

It belongs to the NPIP family.

The protein localises to the membrane. The sequence is that of Nuclear pore complex-interacting protein family member B12 from Homo sapiens (Human).